The chain runs to 71 residues: Small ribosomal subunit protein bS18c (71 aa).

Belongs to the bacterial ribosomal protein bS18 family. As to quaternary structure, part of the 30S ribosomal subunit.

The protein localises to the plastid. Its subcellular location is the cyanelle. This is Small ribosomal subunit protein bS18c (rps18) from Cyanophora paradoxa.